The chain runs to 102 residues: Large ribosomal subunit protein bL21 (102 aa).

Belongs to the bacterial ribosomal protein bL21 family. In terms of assembly, part of the 50S ribosomal subunit. Contacts protein L20.

Functionally, this protein binds to 23S rRNA in the presence of protein L20. The polypeptide is Large ribosomal subunit protein bL21 (Limosilactobacillus fermentum (strain NBRC 3956 / LMG 18251) (Lactobacillus fermentum)).